Consider the following 463-residue polypeptide: Fumarate hydratase class II (463 aa).

Substrate-binding positions include Ser98–Thr100, His129–Asp132, Ser139–Asn141, and Thr187. The interval Lys121–Asn141 is disordered. His188 (proton donor/acceptor) is an active-site residue. Residue Ser318 is part of the active site. Residues Ser319 and Lys324–Asn326 each bind substrate.

The protein belongs to the class-II fumarase/aspartase family. Fumarase subfamily. Homotetramer.

It is found in the cytoplasm. It catalyses the reaction (S)-malate = fumarate + H2O. It participates in carbohydrate metabolism; tricarboxylic acid cycle; (S)-malate from fumarate: step 1/1. In terms of biological role, involved in the TCA cycle. Catalyzes the stereospecific interconversion of fumarate to L-malate. This Rickettsia conorii (strain ATCC VR-613 / Malish 7) protein is Fumarate hydratase class II.